We begin with the raw amino-acid sequence, 490 residues long: Ketol-acid reductoisomerase (NADP(+)) (490 aa).

The region spanning 17-208 is the KARI N-terminal Rossmann domain; sequence LAQCEFMNAD…GGHRAGVLKS (192 aa). NADP(+) is bound by residues 45 to 48, arginine 68, arginine 76, serine 78, and 108 to 110; these read CGAQ and DKQ. The active site involves histidine 132. Residue glycine 158 coordinates NADP(+). KARI C-terminal knotted domains lie at 209 to 353 and 355 to 486; these read SFIA…AEQE and FDNG…MSAM. Mg(2+) is bound by residues aspartate 217, glutamate 221, glutamate 389, and glutamate 393. Serine 414 contacts substrate.

It belongs to the ketol-acid reductoisomerase family. Requires Mg(2+) as cofactor.

It carries out the reaction (2R)-2,3-dihydroxy-3-methylbutanoate + NADP(+) = (2S)-2-acetolactate + NADPH + H(+). The catalysed reaction is (2R,3R)-2,3-dihydroxy-3-methylpentanoate + NADP(+) = (S)-2-ethyl-2-hydroxy-3-oxobutanoate + NADPH + H(+). It participates in amino-acid biosynthesis; L-isoleucine biosynthesis; L-isoleucine from 2-oxobutanoate: step 2/4. The protein operates within amino-acid biosynthesis; L-valine biosynthesis; L-valine from pyruvate: step 2/4. In terms of biological role, involved in the biosynthesis of branched-chain amino acids (BCAA). Catalyzes an alkyl-migration followed by a ketol-acid reduction of (S)-2-acetolactate (S2AL) to yield (R)-2,3-dihydroxy-isovalerate. In the isomerase reaction, S2AL is rearranged via a Mg-dependent methyl migration to produce 3-hydroxy-3-methyl-2-ketobutyrate (HMKB). In the reductase reaction, this 2-ketoacid undergoes a metal-dependent reduction by NADPH to yield (R)-2,3-dihydroxy-isovalerate. The protein is Ketol-acid reductoisomerase (NADP(+)) of Pseudoalteromonas translucida (strain TAC 125).